We begin with the raw amino-acid sequence, 299 residues long: GTPase Era (299 aa).

Positions 5–172 (KSGFVSIIGR…IDVLKSFLPE (168 aa)) constitute an Era-type G domain. A G1 region spans residues 13 to 20 (GRPNVGKS). 13 to 20 (GRPNVGKS) serves as a coordination point for GTP. The interval 39 to 43 (QTTRN) is G2. Residues 60–63 (DTPG) form a G3 region. GTP is bound by residues 60–64 (DTPGI) and 122–125 (NKID). Residues 122–125 (NKID) are G4. Residues 151–153 (ISA) form a G5 region. In terms of domain architecture, KH type-2 spans 203-280 (TSEEIPHAIG…YLELWVKVQR (78 aa)).

The protein belongs to the TRAFAC class TrmE-Era-EngA-EngB-Septin-like GTPase superfamily. Era GTPase family. In terms of assembly, monomer.

Its subcellular location is the cytoplasm. The protein resides in the cell membrane. Its function is as follows. An essential GTPase that binds both GDP and GTP, with rapid nucleotide exchange. Plays a role in 16S rRNA processing and 30S ribosomal subunit biogenesis and possibly also in cell cycle regulation and energy metabolism. This Staphylococcus epidermidis (strain ATCC 35984 / DSM 28319 / BCRC 17069 / CCUG 31568 / BM 3577 / RP62A) protein is GTPase Era.